Reading from the N-terminus, the 238-residue chain is Tetraspanin-4 (238 aa).

The Cytoplasmic portion of the chain corresponds to 1–13 (MARGCLQGVKYLM). The chain crosses the membrane as a helical span at residues 14–34 (FAFNLLFWLGGCGVLGVGIWL). The Extracellular segment spans residues 35 to 55 (AATQGNFATLSSSFPSLSAAN). The helical transmembrane segment at 56-76 (LLIVTGTFVMAIGFVGCIGAL) threads the bilayer. Residues 77–85 (KENKCLLLT) lie on the Cytoplasmic side of the membrane. The helical transmembrane segment at 86 to 106 (FFVLLLLVFLLEATIAVLFFA) threads the bilayer. At 107-201 (YSDKIDSYAQ…ETVKAWLQEN (95 aa)) the chain is on the extracellular side. N-linked (GlcNAc...) asparagine glycans are attached at residues Asn-152 and Asn-161. Residues 202 to 222 (LLAVGIFGLCTALVQILGLTF) form a helical membrane-spanning segment. The Cytoplasmic portion of the chain corresponds to 223–238 (AMTMYCQVVKADTYCA).

Belongs to the tetraspanin (TM4SF) family. As to quaternary structure, forms a complex with integrins.

The protein localises to the membrane. The chain is Tetraspanin-4 (Tspan4) from Mus musculus (Mouse).